Here is a 158-residue protein sequence, read N- to C-terminus: Ribosomal RNA large subunit methyltransferase H (158 aa).

Residues Leu-72, Gly-103, and 122–127 (LGNLTL) each bind S-adenosyl-L-methionine.

This sequence belongs to the RNA methyltransferase RlmH family. Homodimer.

It is found in the cytoplasm. It catalyses the reaction pseudouridine(1915) in 23S rRNA + S-adenosyl-L-methionine = N(3)-methylpseudouridine(1915) in 23S rRNA + S-adenosyl-L-homocysteine + H(+). In terms of biological role, specifically methylates the pseudouridine at position 1915 (m3Psi1915) in 23S rRNA. This is Ribosomal RNA large subunit methyltransferase H from Acidiphilium cryptum (strain JF-5).